The following is a 478-amino-acid chain: MLO-like protein 13 (478 aa).

Topologically, residues 1–10 (MAEARSGSLE) are extracellular. Residues 11–31 (YTPTWVVAFICFIIVLLSLLA) form a helical membrane-spanning segment. Residues 32 to 60 (ERGLHHLGKCLKRRQQDALFEALQKLKEE) lie on the Cytoplasmic side of the membrane. The helical transmembrane segment at 61-81 (LMLLGFISLMLTVSQAAIRHI) threads the bilayer. Over 82–145 (CVPPALVNNM…VSVEALHQLH (64 aa)) the chain is Extracellular. A helical membrane pass occupies residues 146–166 (IFIFVLAVFHVIFCASTMVLG). At 167 to 276 (GARIQQWKHW…LRTLEIDFKK (110 aa)) the chain is on the cytoplasmic side. 2 helical membrane passes run 277-297 (VVSISWYLWLFVVVFLLLNVG) and 298-318 (GWNTYFWLSFLPLILLLMVGA). The Cytoplasmic portion of the chain corresponds to 319 to 360 (KLEYIISSLALDVSEKRSRAEEAVITPSDELFWFHRPGIVLQ). A helical membrane pass occupies residues 361–381 (LIHFILFQNSFEIAFFFWILF). Residues 382–400 (TYGIHSCIMEKLGYLIPRL) lie on the Extracellular side of the membrane. Residues 401-421 (VMGVLVQVLCSYSTLPLYALV) form a helical membrane-spanning segment. Over 422 to 478 (TQMGSKFKKGIFDNVVQSTLEGWLEDTRNRGESTSEAHRIEMQPTTPESYNVQSENP) the chain is Cytoplasmic. The calmodulin-binding stretch occupies residues 435 to 456 (NVVQSTLEGWLEDTRNRGESTS). Basic and acidic residues predominate over residues 449 to 462 (RNRGESTSEAHRIE). Residues 449–478 (RNRGESTSEAHRIEMQPTTPESYNVQSENP) form a disordered region. A compositionally biased stretch (polar residues) spans 464-478 (QPTTPESYNVQSENP).

It belongs to the MLO family.

The protein resides in the membrane. Its function is as follows. May be involved in modulation of pathogen defense and leaf cell death. Activity seems to be regulated by Ca(2+)-dependent calmodulin binding and seems not to require heterotrimeric G proteins. This Arabidopsis thaliana (Mouse-ear cress) protein is MLO-like protein 13 (MLO13).